Here is a 40-residue protein sequence, read N- to C-terminus: Potassium channel toxin alpha-KTx 12.3 (40 aa).

4 disulfides stabilise this stretch: cysteine 2–cysteine 5, cysteine 10–cysteine 31, cysteine 16–cysteine 36, and cysteine 20–cysteine 38.

In terms of tissue distribution, expressed by the venom gland.

The protein localises to the secreted. Functionally, inhibits high conductance calcium-activated potassium channels (KCNMA). Inhibits Shaker B potassium channels. This Tityus costatus (Brazilian scorpion) protein is Potassium channel toxin alpha-KTx 12.3.